The chain runs to 282 residues: Nudix hydrolase 7 (282 aa).

Residues 101-233 enclose the Nudix hydrolase domain; sequence SHVVGAGALV…KNEMFKFMAN (133 aa). Positions 139–160 match the Nudix box motif; that stretch reads GVINEGEDIWTGVAREVEEETG. Mg(2+) is bound by residues Glu-154 and Glu-158.

The protein belongs to the Nudix hydrolase family. Homodimer. Interacts with RACK1A, GG1 and GG2. Requires Mg(2+) as cofactor. As to expression, expressed in stems, leaves, roots, flowers and siliques.

The protein localises to the nucleus. Its subcellular location is the cytoplasm. The protein resides in the cell membrane. It carries out the reaction ADP-D-ribose + H2O = D-ribose 5-phosphate + AMP + 2 H(+). The catalysed reaction is NAD(+) + H2O = beta-nicotinamide D-ribonucleotide + AMP + 2 H(+). It catalyses the reaction NADH + H2O = reduced beta-nicotinamide D-ribonucleotide + AMP + 2 H(+). With respect to regulation, not inhibited by fluoride. Mediates the hydrolysis of some nucleoside diphosphate derivatives. Can use both NADH and ADP-ribose as substrates, but not 8-oxo-dGTP, cyclic ADP-ribose, GDP-mannose, UDP-glucose, ATP, or GTP. Exerts negative control of EDS1 signaling. This chain is Nudix hydrolase 7 (NUDT7), found in Arabidopsis thaliana (Mouse-ear cress).